Here is a 188-residue protein sequence, read N- to C-terminus: Adenine phosphoribosyltransferase (188 aa).

Belongs to the purine/pyrimidine phosphoribosyltransferase family. As to quaternary structure, homodimer.

The protein localises to the cytoplasm. It carries out the reaction AMP + diphosphate = 5-phospho-alpha-D-ribose 1-diphosphate + adenine. Its pathway is purine metabolism; AMP biosynthesis via salvage pathway; AMP from adenine: step 1/1. In terms of biological role, catalyzes a salvage reaction resulting in the formation of AMP, that is energically less costly than de novo synthesis. This is Adenine phosphoribosyltransferase from Burkholderia thailandensis (strain ATCC 700388 / DSM 13276 / CCUG 48851 / CIP 106301 / E264).